The sequence spans 354 residues: Protein RecA (354 aa).

67-74 (GPESSGKT) is an ATP binding site.

This sequence belongs to the RecA family.

The protein localises to the cytoplasm. Functionally, can catalyze the hydrolysis of ATP in the presence of single-stranded DNA, the ATP-dependent uptake of single-stranded DNA by duplex DNA, and the ATP-dependent hybridization of homologous single-stranded DNAs. It interacts with LexA causing its activation and leading to its autocatalytic cleavage. This Serratia marcescens protein is Protein RecA.